The sequence spans 241 residues: Small ribosomal subunit protein uS3 (241 aa).

The region spanning 39 to 107 (MRKFVMDELK…ETHLNIVEVR (69 aa)) is the KH type-2 domain. The interval 214 to 241 (ASERRALEGDAQGPASRDRDRDRRRDNA) is disordered. Residues 229–241 (SRDRDRDRRRDNA) show a composition bias toward basic and acidic residues.

The protein belongs to the universal ribosomal protein uS3 family. Part of the 30S ribosomal subunit. Forms a tight complex with proteins S10 and S14.

Its function is as follows. Binds the lower part of the 30S subunit head. Binds mRNA in the 70S ribosome, positioning it for translation. The chain is Small ribosomal subunit protein uS3 from Rhizobium rhizogenes (strain K84 / ATCC BAA-868) (Agrobacterium radiobacter).